A 395-amino-acid polypeptide reads, in one-letter code: Elongation factor Tu (395 aa).

The 195-residue stretch at 10-204 (KPHVNIGTIG…EVDAYIPTPE (195 aa)) folds into the tr-type G domain. The G1 stretch occupies residues 19–26 (GHVDHGKT). 19–26 (GHVDHGKT) provides a ligand contact to GTP. T26 contacts Mg(2+). The tract at residues 60 to 64 (GITIS) is G2. A G3 region spans residues 81–84 (DCPG). GTP-binding positions include 81-85 (DCPGH) and 136-139 (NKCD). The G4 stretch occupies residues 136–139 (NKCD). The segment at 174 to 176 (SAL) is G5.

Belongs to the TRAFAC class translation factor GTPase superfamily. Classic translation factor GTPase family. EF-Tu/EF-1A subfamily. As to quaternary structure, monomer.

It localises to the cytoplasm. The enzyme catalyses GTP + H2O = GDP + phosphate + H(+). In terms of biological role, GTP hydrolase that promotes the GTP-dependent binding of aminoacyl-tRNA to the A-site of ribosomes during protein biosynthesis. This is Elongation factor Tu from Bacillus cereus (strain ATCC 10987 / NRS 248).